The primary structure comprises 347 residues: DNA-directed RNA polymerase subunit alpha (347 aa).

An alpha N-terminal domain (alpha-NTD) region spans residues 1 to 226; it reads MLISQRPTLS…ELFGLARELN (226 aa). Residues 243–347 form an alpha C-terminal domain (alpha-CTD) region; it reads HIASFALPID…SQDYAETEQL (105 aa). Positions 326–347 are disordered; the sequence is TTGTWSTDGAYDSQDYAETEQL.

It belongs to the RNA polymerase alpha chain family. In terms of assembly, homodimer. The RNAP catalytic core consists of 2 alpha, 1 beta, 1 beta' and 1 omega subunit. When a sigma factor is associated with the core the holoenzyme is formed, which can initiate transcription.

The enzyme catalyses RNA(n) + a ribonucleoside 5'-triphosphate = RNA(n+1) + diphosphate. DNA-dependent RNA polymerase catalyzes the transcription of DNA into RNA using the four ribonucleoside triphosphates as substrates. The sequence is that of DNA-directed RNA polymerase subunit alpha from Mycobacterium leprae (strain TN).